Here is a 342-residue protein sequence, read N- to C-terminus: Olfactory receptor 51F2 (342 aa).

At 1–39 the chain is on the extracellular side; it reads MTETSLSSQCFPMSVLNNTIAEPLIFLLMGIPGLKATQY. Asparagine 17 is a glycosylation site (N-linked (GlcNAc...) asparagine). The chain crosses the membrane as a helical span at residues 40–60; sequence WISIPFCLLYVVAVSGNSMIL. Over 61–68 the chain is Cytoplasmic; the sequence is FVVLCERS. The chain crosses the membrane as a helical span at residues 69–89; sequence LHKPMYYFLSMLSATDLSLSL. Residues 90-113 lie on the Extracellular side of the membrane; the sequence is CTLSTTLGVFWFEAREINLNACIA. Cysteines 111 and 203 form a disulfide. Residues 114 to 134 form a helical membrane-spanning segment; it reads QMFFLHGFTFMESGVLLAMAF. At 135 to 153 the chain is on the cytoplasmic side; the sequence is DRFVAICYPLRYTTILTNA. The chain crosses the membrane as a helical span at residues 154–174; it reads RIAKIGMSMLIRNVAVMLPVM. The Extracellular portion of the chain corresponds to 175–210; the sequence is LFVKRLSFCSSMVLSHSYCYHVDLIQLSCTDNRINS. Residues 211-231 form a helical membrane-spanning segment; that stretch reads ILGLFALLSTTGFDCPCILLS. Topologically, residues 232–251 are cytoplasmic; that stretch reads YILIIRSVLSIASSEERRKA. A helical transmembrane segment spans residues 252-272; the sequence is FNTCTSHISAVSIFYLPLISL. Residues 273–287 lie on the Extracellular side of the membrane; sequence SLVHRYGHSAPPFVH. A helical membrane pass occupies residues 288–308; the sequence is IIMANVFLLIPPVLNPIIYSV. Topologically, residues 309–342 are cytoplasmic; it reads KIKQIQKAIIKVLIQKHSKSNHQLFLIRDKAIYE.

Belongs to the G-protein coupled receptor 1 family.

The protein resides in the cell membrane. In terms of biological role, odorant receptor. This Homo sapiens (Human) protein is Olfactory receptor 51F2 (OR51F2).